We begin with the raw amino-acid sequence, 211 residues long: MVIMGNELQLENKILKGTTTVGIRVNDGVILAADRRASAGFFVANKMVRKVLYITDKIGITTAGSVADLQFIYDVLKNIYHYNSITKYGPISIKGIATRLANVLSATKYFPYIVQILIGGYDDQPRLFNLDYLGDITEENYVATGSGSPVAMGVLEDEYNPKMTLDEAADLAKRAVFSAIKRDSFTGTGVIVAKIHSKGHEELEFYLNKKM.

The propeptide at Met-1–Gly-17 is removed in mature form; by autocatalysis. Thr-18 (nucleophile) is an active-site residue.

Belongs to the peptidase T1B family. The 20S proteasome core is composed of 14 alpha and 14 beta subunits that assemble into four stacked heptameric rings, resulting in a barrel-shaped structure. The two inner rings, each composed of seven catalytic beta subunits, are sandwiched by two outer rings, each composed of seven alpha subunits. The catalytic chamber with the active sites is on the inside of the barrel. Has a gated structure, the ends of the cylinder being occluded by the N-termini of the alpha-subunits. Is capped at one or both ends by the proteasome regulatory ATPase, PAN.

The protein localises to the cytoplasm. The catalysed reaction is Cleavage of peptide bonds with very broad specificity.. Its activity is regulated as follows. The formation of the proteasomal ATPase PAN-20S proteasome complex, via the docking of the C-termini of PAN into the intersubunit pockets in the alpha-rings, triggers opening of the gate for substrate entry. Interconversion between the open-gate and close-gate conformations leads to a dynamic regulation of the 20S proteasome proteolysis activity. Functionally, component of the proteasome core, a large protease complex with broad specificity involved in protein degradation. This chain is Proteasome subunit beta 2, found in Saccharolobus solfataricus (strain 98/2) (Sulfolobus solfataricus).